Here is a 77-residue protein sequence, read N- to C-terminus: Sec-independent protein translocase protein TatA (77 aa).

Residues 1-21 form a helical membrane-spanning segment; sequence MGSFSIWHWLVVGILVLLLFG. The disordered stretch occupies residues 41 to 77; sequence KGMSEDDAPTPAPKQIDAQRAPDLSATPTPTAETENR. Residues 66–77 are compositionally biased toward polar residues; sequence ATPTPTAETENR.

It belongs to the TatA/E family. The Tat system comprises two distinct complexes: a TatABC complex, containing multiple copies of TatA, TatB and TatC subunits, and a separate TatA complex, containing only TatA subunits. Substrates initially bind to the TatABC complex, which probably triggers association of the separate TatA complex to form the active translocon.

Its subcellular location is the cell inner membrane. Functionally, part of the twin-arginine translocation (Tat) system that transports large folded proteins containing a characteristic twin-arginine motif in their signal peptide across membranes. TatA could form the protein-conducting channel of the Tat system. This Sphingopyxis alaskensis (strain DSM 13593 / LMG 18877 / RB2256) (Sphingomonas alaskensis) protein is Sec-independent protein translocase protein TatA.